Reading from the N-terminus, the 284-residue chain is MIIESRIEKGNPVVGMETTVFVHGLPRKEAIELFRRAKEISREKGFQLVVIGILKGKIIVGMSEEELETMMREGADKIGTREIPIAVAKGKNAATTVSATIFLSRRIGIEVVVTGGTGGVHPGRVDVSQDLTEMASSRTILVSSGIKSILDVEATFEMLETLEIPLVGFKTDEFPLFFSRKSGRRVPRVESVEEVLKIYETMREIGFEKTLMVLNPVPEEYEVPHDEIERLLEKIELEAEGKEVTPFLLKKLAEMTNGRTLKANLALLEENVKLAGEIAMKLKR.

Glutamate 17 (proton donor) is an active-site residue. Residues lysine 77 and valine 97 each coordinate substrate. Position 126 (aspartate 126) interacts with Mn(2+). 128-130 (SQD) is a substrate binding site. The active-site Nucleophile is lysine 147.

It belongs to the pseudouridine-5'-phosphate glycosidase family. Homotrimer. Mn(2+) serves as cofactor.

It carries out the reaction D-ribose 5-phosphate + uracil = psi-UMP + H2O. In terms of biological role, catalyzes the reversible cleavage of pseudouridine 5'-phosphate (PsiMP) to ribose 5-phosphate and uracil. Functions biologically in the cleavage direction, as part of a pseudouridine degradation pathway. The chain is Pseudouridine-5'-phosphate glycosidase from Thermotoga petrophila (strain ATCC BAA-488 / DSM 13995 / JCM 10881 / RKU-1).